The following is an 84-amino-acid chain: RQC P-site tRNA stabilizing factor (84 aa).

The 64-residue stretch at 1–64 (MRIDKFLQSV…IEEYTILQIP (64 aa)) folds into the S4 RNA-binding domain.

Belongs to the RqcP family. In terms of assembly, associates with stalled 50S ribosomal subunits. Binds to RqcH, 23S rRNA and the P-site tRNA. Does not require RqcH for association with 50S subunits.

Functionally, key component of the ribosome quality control system (RQC), a ribosome-associated complex that mediates the extraction of incompletely synthesized nascent chains from stalled ribosomes and their subsequent degradation. RqcH recruits Ala-charged tRNA, and with RqcP directs the elongation of stalled nascent chains on 50S ribosomal subunits, leading to non-templated C-terminal alanine extensions (Ala tail). The Ala tail promotes nascent chain degradation. RqcP is associated with the translocation-like movement of the peptidyl-tRNA from the A-site into the P-site. This is RQC P-site tRNA stabilizing factor from Helicobacter pylori (strain ATCC 700392 / 26695) (Campylobacter pylori).